We begin with the raw amino-acid sequence, 266 residues long: Type III pantothenate kinase (266 aa).

Position 11–18 (11–18) interacts with ATP; the sequence is DIGNTSTV. 111-114 is a binding site for substrate; it reads GADR. The Proton acceptor role is filled by aspartate 113. Aspartate 135 provides a ligand contact to K(+). Threonine 138 contributes to the ATP binding site. A substrate-binding site is contributed by threonine 190.

Belongs to the type III pantothenate kinase family. In terms of assembly, homodimer. NH4(+) serves as cofactor. K(+) is required as a cofactor.

The protein localises to the cytoplasm. It catalyses the reaction (R)-pantothenate + ATP = (R)-4'-phosphopantothenate + ADP + H(+). It functions in the pathway cofactor biosynthesis; coenzyme A biosynthesis; CoA from (R)-pantothenate: step 1/5. Its function is as follows. Catalyzes the phosphorylation of pantothenate (Pan), the first step in CoA biosynthesis. The polypeptide is Type III pantothenate kinase (Deinococcus geothermalis (strain DSM 11300 / CIP 105573 / AG-3a)).